Consider the following 425-residue polypeptide: Serine--tRNA ligase (425 aa).

230-232 contacts L-serine; the sequence is TAE. Residue 261 to 263 coordinates ATP; the sequence is RSE. Position 284 (Glu284) interacts with L-serine. ATP is bound at residue 348–351; the sequence is EISS. Ser384 lines the L-serine pocket.

The protein belongs to the class-II aminoacyl-tRNA synthetase family. Type-1 seryl-tRNA synthetase subfamily. As to quaternary structure, homodimer. The tRNA molecule binds across the dimer.

It localises to the cytoplasm. It catalyses the reaction tRNA(Ser) + L-serine + ATP = L-seryl-tRNA(Ser) + AMP + diphosphate + H(+). The enzyme catalyses tRNA(Sec) + L-serine + ATP = L-seryl-tRNA(Sec) + AMP + diphosphate + H(+). It functions in the pathway aminoacyl-tRNA biosynthesis; selenocysteinyl-tRNA(Sec) biosynthesis; L-seryl-tRNA(Sec) from L-serine and tRNA(Sec): step 1/1. In terms of biological role, catalyzes the attachment of serine to tRNA(Ser). Is also able to aminoacylate tRNA(Sec) with serine, to form the misacylated tRNA L-seryl-tRNA(Sec), which will be further converted into selenocysteinyl-tRNA(Sec). The polypeptide is Serine--tRNA ligase (Streptococcus thermophilus (strain ATCC BAA-491 / LMD-9)).